The sequence spans 266 residues: Integral membrane protein 2B (266 aa).

Over methionine 1–cysteine 54 the chain is Cytoplasmic. Residues tryptophan 55–leucine 75 traverse the membrane as a helical; Signal-anchor for type II membrane protein segment. Over tyrosine 76 to serine 266 the chain is Lumenal. Residues glutamate 102 to valine 134 are necessary for interaction with APP and inhibitor effects on APP processing. One can recognise a BRICHOS domain in the interval phenylalanine 137–leucine 231. 2 disulfide bridges follow: cysteine 164/cysteine 223 and cysteine 248/cysteine 265. Asparagine 170 carries an N-linked (GlcNAc...) asparagine glycan.

Belongs to the ITM2 family. Homodimer; disulfide-linked. Interacts with SPPL2A and SPPL2B. Interacts with APP. Mature BRI2 (mBRI2) interacts with the APP amyloid-beta A4 protein; the interaction occurs at the cell surface and in the endocytic compartments and enable alpha- and beta-secretase-induced APP cleavage inhibition. Mature BRI2 (mBRI2) interacts with the APP C99; the interaction occurs in the endocytic compartments and enable gamma-secretase-induced C99 cleavage inhibition. May form heterodimers with Bri23 peptide and APP amyloid-beta protein 40. Interacts with ADAM7 in sperm; the interaction increases following capacitation. Post-translationally, the ectodomain C-terminal part of the imBRI2 is processed by furin producing a secreted Bri23 peptide and a mature BRI2, membrane form (mBRI2). The remaining part of the ectodomain of mBRI2 containing the BRICHOS domain is cleaved by ADAM10 and is secreted (BRI2C, soluble form). The membrane-bound N-terminal fragment (BRI2C, membrane form) is further proteolytically processed by SPPL2A and SPPL2B through regulated intramembrane proteolysis producing a secreted C-peptide and a BRI2 intracellular domain (BRI2 ICD) released in the cytosol. Shedding by ADAM10 facilitates intramembrane cleavage but is not absolutely required for BRI2 ICD generation. Glycosylation at Asn-170 is important for cell surface localization, but doesn't affect furin- and ADAM10-induced proteolytic processing. In terms of tissue distribution, ubiquitous. Expressed in brain.

It is found in the golgi apparatus membrane. Its subcellular location is the cell membrane. The protein localises to the endosome membrane. It localises to the secreted. Plays a regulatory role in the processing of the amyloid-beta A4 precursor protein (APP) and acts as an inhibitor of the amyloid-beta peptide aggregation and fibrils deposition. Plays a role in the induction of neurite outgrowth. Functions as a protease inhibitor by blocking access of secretases to APP cleavage sites. Its function is as follows. Mature BRI2 (mBRI2) functions as a modulator of the amyloid-beta A4 precursor protein (APP) processing leading to a strong reduction in the secretion of secretase-processed amyloid-beta protein 40 and amyloid-beta protein 42. Functionally, bri23 peptide prevents aggregation of APP amyloid-beta protein 42 into toxic oligomers. The protein is Integral membrane protein 2B (ITM2B) of Homo sapiens (Human).